A 242-amino-acid polypeptide reads, in one-letter code: Peroxisomal membrane protein 11-3 (242 aa).

A disordered region spans residues Met1–Pro22. At Met1–Ala102 the chain is on the cytoplasmic side. A helical transmembrane segment spans residues Val103–Leu123. Residues Ala124–Lys214 are Lumenal-facing. Residues Gly215 to Ala235 traverse the membrane as a helical segment. Topologically, residues His236 to Cys242 are cytoplasmic.

This sequence belongs to the peroxin-11 family. As to expression, expressed in seedlings, roots, leaf sheaths, spikelets and endosperm.

It is found in the peroxisome membrane. Involved in peroxisomal proliferation. The chain is Peroxisomal membrane protein 11-3 (PEX11-3) from Oryza sativa subsp. japonica (Rice).